A 460-amino-acid chain; its full sequence is 3-isopropylmalate dehydratase large subunit (460 aa).

[4Fe-4S] cluster contacts are provided by Cys338, Cys398, and Cys401.

Belongs to the aconitase/IPM isomerase family. LeuC type 1 subfamily. As to quaternary structure, heterodimer of LeuC and LeuD. It depends on [4Fe-4S] cluster as a cofactor.

The catalysed reaction is (2R,3S)-3-isopropylmalate = (2S)-2-isopropylmalate. Its pathway is amino-acid biosynthesis; L-leucine biosynthesis; L-leucine from 3-methyl-2-oxobutanoate: step 2/4. In terms of biological role, catalyzes the isomerization between 2-isopropylmalate and 3-isopropylmalate, via the formation of 2-isopropylmaleate. The chain is 3-isopropylmalate dehydratase large subunit from Streptococcus thermophilus (strain ATCC BAA-250 / LMG 18311).